A 1052-amino-acid polypeptide reads, in one-letter code: Eukaryotic translation initiation factor 3 subunit A (1052 aa).

Residues 92–121 (LKKFIELAEKKVTEAQAKADEIQSSLESAA) are a coiled coil. Residues 339 to 523 (MTKAASFVLL…GVLTFDTDVF (185 aa)) form the PCI domain. The stretch at 580–906 (EARLQAKRAA…AEARRAARRT (327 aa)) forms a coiled coil. Basic and acidic residues-rich tracts occupy residues 617–632 (AATD…EETR) and 794–901 (KEVS…EARR). Disordered stretches follow at residues 617-646 (AATD…AEKQ) and 794-1052 (KEVS…QGGQ). 2 stretches are compositionally biased toward low complexity: residues 905 to 927 (RTGG…TAPR) and 948 to 964 (KEAA…AAPE). Polar residues predominate over residues 1013–1028 (GSSQPPSRTQTPGSSS).

This sequence belongs to the eIF-3 subunit A family. In terms of assembly, component of the eukaryotic translation initiation factor 3 (eIF-3) complex.

It localises to the cytoplasm. In terms of biological role, RNA-binding component of the eukaryotic translation initiation factor 3 (eIF-3) complex, which is involved in protein synthesis of a specialized repertoire of mRNAs and, together with other initiation factors, stimulates binding of mRNA and methionyl-tRNAi to the 40S ribosome. The eIF-3 complex specifically targets and initiates translation of a subset of mRNAs involved in cell proliferation. The protein is Eukaryotic translation initiation factor 3 subunit A (tif32) of Aspergillus niger (strain ATCC MYA-4892 / CBS 513.88 / FGSC A1513).